Here is a 614-residue protein sequence, read N- to C-terminus: GPI transamidase component GAA1 (614 aa).

The Cytoplasmic segment spans residues 1-19 (MALLEKLHRRIVDMGLVPR). A helical transmembrane segment spans residues 20–40 (IIALLPVISMLCALFGFISIA). At 41–356 (ILPMDGQYRR…APRQFVSISS (316 aa)) the chain is on the lumenal side. The N-linked (GlcNAc...) asparagine glycan is linked to asparagine 87. Residues 357 to 377 (YLPSAVALSIAFAISSLNAFI) form a helical membrane-spanning segment. At 378 to 394 (NNAYANISLFSEYNLVA) the chain is on the cytoplasmic side. Residues 395-415 (LLVWFVSLVISFVVSQAFLLI) form a helical membrane-spanning segment. Residues 416-464 (PSSGLLMTISMASCFLPLILSRKIHISEPLSYRLKNVAFLYFSLVSTSL) are Lumenal-facing. Residues 465–485 (LMINFAMALLIGTLAFPMTFV) traverse the membrane as a helical segment. Over 486-535 (KTIVESSSEHEVTTQSSNPIKTEPKDEIELVENHMDTTPATPQQQKQKLK) the chain is Cytoplasmic. Residues 536–556 (NLVLLILTNPFISITLFGLFF) form a helical membrane-spanning segment. The Lumenal segment spans residues 557–577 (DDEFHGFDIINKLVSAWLDLK). The helical transmembrane segment at 578–598 (CWSWFVLCIGWLPCWLLILAS) threads the bilayer. The Cytoplasmic segment spans residues 599 to 614 (SFESKSVVVRSKEKQS). Positions 610 to 614 (KEKQS) match the Prevents secretion from ER motif.

As to quaternary structure, forms a complex with CDC91, GPI17, GPI16 and GPI8.

The protein localises to the endoplasmic reticulum membrane. It functions in the pathway glycolipid biosynthesis; glycosylphosphatidylinositol-anchor biosynthesis. Component of the GPI transamidase complex. Required for a terminal step of GPI anchor attachment onto proteins. Affects endocytosis. This is GPI transamidase component GAA1 (GAA1) from Saccharomyces cerevisiae (strain ATCC 204508 / S288c) (Baker's yeast).